Reading from the N-terminus, the 1057-residue chain is Outer capsid protein VP2 (1057 aa).

It belongs to the orbivirus VP2 family.

It is found in the virion. Its function is as follows. The VP2 protein is one of the two proteins (with VP5) which constitute the virus particle outer capsid. It is the major target of the host immunogenic response. This chain is Outer capsid protein VP2 (Segment-2), found in Anas (ducks).